The following is a 573-amino-acid chain: Glutamate--tRNA ligase (573 aa).

Positions 107–117 (PNPDGAFHLGN) match the 'HIGH' region motif.

This sequence belongs to the class-I aminoacyl-tRNA synthetase family. Glutamate--tRNA ligase type 2 subfamily.

The protein resides in the cytoplasm. The catalysed reaction is tRNA(Glu) + L-glutamate + ATP = L-glutamyl-tRNA(Glu) + AMP + diphosphate. Functionally, catalyzes the attachment of glutamate to tRNA(Glu) in a two-step reaction: glutamate is first activated by ATP to form Glu-AMP and then transferred to the acceptor end of tRNA(Glu). In Thermococcus kodakarensis (strain ATCC BAA-918 / JCM 12380 / KOD1) (Pyrococcus kodakaraensis (strain KOD1)), this protein is Glutamate--tRNA ligase.